We begin with the raw amino-acid sequence, 324 residues long: Ribosomal lysine N-methyltransferase 5 (324 aa).

S-adenosyl-L-methionine-binding positions include tryptophan 90, 140–142 (GSG), aspartate 162, tryptophan 217, and methionine 247.

Belongs to the class I-like SAM-binding methyltransferase superfamily. RKM5 family.

In terms of biological role, S-adenosyl-L-methionine-dependent protein-lysine N-methyltransferase that methylates 60S ribosomal protein L1. In Vanderwaltozyma polyspora (strain ATCC 22028 / DSM 70294 / BCRC 21397 / CBS 2163 / NBRC 10782 / NRRL Y-8283 / UCD 57-17) (Kluyveromyces polysporus), this protein is Ribosomal lysine N-methyltransferase 5 (RKM5).